The following is a 148-amino-acid chain: Large ribosomal subunit protein bL9 (148 aa).

It belongs to the bacterial ribosomal protein bL9 family.

Binds to the 23S rRNA. This chain is Large ribosomal subunit protein bL9, found in Lysinibacillus sphaericus (strain C3-41).